The sequence spans 201 residues: Small ribosomal subunit protein uS4c (201 aa).

A disordered region spans residues 15 to 44 (LGALPGLTSKRPRSGSDLRNQSRSGKKSQY). Residues 89–150 (MRLDNILFRL…EQRSRALIQN (62 aa)) form the S4 RNA-binding domain.

The protein belongs to the universal ribosomal protein uS4 family. Part of the 30S ribosomal subunit. Contacts protein S5. The interaction surface between S4 and S5 is involved in control of translational fidelity.

The protein localises to the plastid. Its subcellular location is the chloroplast. In terms of biological role, one of the primary rRNA binding proteins, it binds directly to 16S rRNA where it nucleates assembly of the body of the 30S subunit. With S5 and S12 plays an important role in translational accuracy. The polypeptide is Small ribosomal subunit protein uS4c (rps4) (Calycanthus floridus var. glaucus (Eastern sweetshrub)).